Consider the following 155-residue polypeptide: UPF0178 protein ACICU_02858 (155 aa).

The segment at 120–155 (GAGVQTGGPPPISERDKREFSSALDQTILKQKRKTA) is disordered.

It belongs to the UPF0178 family.

The polypeptide is UPF0178 protein ACICU_02858 (Acinetobacter baumannii (strain ACICU)).